Reading from the N-terminus, the 403-residue chain is Phosphoglycerate kinase (403 aa).

Residues 24 to 26 (DLN), arginine 39, 62 to 65 (HLGR), arginine 121, and arginine 161 contribute to the substrate site. Residues lysine 211, glycine 299, glutamate 330, and 359–362 (GGDS) each bind ATP.

The protein belongs to the phosphoglycerate kinase family. In terms of assembly, monomer.

The protein resides in the cytoplasm. It catalyses the reaction (2R)-3-phosphoglycerate + ATP = (2R)-3-phospho-glyceroyl phosphate + ADP. It participates in carbohydrate degradation; glycolysis; pyruvate from D-glyceraldehyde 3-phosphate: step 2/5. The chain is Phosphoglycerate kinase from Rhodococcus jostii (strain RHA1).